The primary structure comprises 188 residues: UPF0398 protein SSP1297 (188 aa).

The protein belongs to the UPF0398 family.

The protein is UPF0398 protein SSP1297 of Staphylococcus saprophyticus subsp. saprophyticus (strain ATCC 15305 / DSM 20229 / NCIMB 8711 / NCTC 7292 / S-41).